The chain runs to 660 residues: Cysteine--tRNA ligase, cytoplasmic (660 aa).

The span at 1-10 (MSENSSPKLE) shows a compositional bias: polar residues. The segment at 1–20 (MSENSSPKLESTSAAAASTK) is disordered. Cys-65 contacts Zn(2+). A 'HIGH' region motif is present at residues 67–77 (PTVYDASHMGH). Residues Cys-256, His-281, and Glu-285 each contribute to the Zn(2+) site. Residues 314–318 (KMSKS) carry the 'KMSKS' region motif. Lys-317 is an ATP binding site. Disordered regions lie at residues 563–584 (IEKK…KFEK) and 627–660 (QKEY…QSPQ). Over residues 627 to 639 (QKEYDNQTKEHNN) the composition is skewed to basic and acidic residues. The segment covering 643 to 660 (SLSTSTSSPTLTSTQSPQ) has biased composition (low complexity).

Belongs to the class-I aminoacyl-tRNA synthetase family. Requires Zn(2+) as cofactor.

Its subcellular location is the cytoplasm. The catalysed reaction is tRNA(Cys) + L-cysteine + ATP = L-cysteinyl-tRNA(Cys) + AMP + diphosphate. The sequence is that of Cysteine--tRNA ligase, cytoplasmic (cysS) from Dictyostelium discoideum (Social amoeba).